A 404-amino-acid chain; its full sequence is Serine/threonine transporter SstT (404 aa).

Helical transmembrane passes span 17 to 37, 39 to 59, 75 to 95, 138 to 158, 179 to 199, 212 to 232, 287 to 307, and 313 to 333; these read IGIG…LTGF, ILGK…VFAL, MTLI…VAVL, ALAT…GLAL, IVVW…FTTI, FLIL…NPLI, IPLG…VLTL, and FGIP…AVSA.

The protein belongs to the dicarboxylate/amino acid:cation symporter (DAACS) (TC 2.A.23) family.

The protein localises to the cell membrane. It carries out the reaction L-serine(in) + Na(+)(in) = L-serine(out) + Na(+)(out). The catalysed reaction is L-threonine(in) + Na(+)(in) = L-threonine(out) + Na(+)(out). Involved in the import of serine and threonine into the cell, with the concomitant import of sodium (symport system). This is Serine/threonine transporter SstT from Streptococcus pyogenes serotype M2 (strain MGAS10270).